A 1076-amino-acid chain; its full sequence is Inositol-1,4,5-trisphosphate 5-phosphatase 1 (1076 aa).

In terms of domain architecture, SAC spans 144–474; that stretch reads LRKLLTNGSF…GDALARIYTG (331 aa). The tract at residues 534–880 is catalytic; sequence YDPIHEYVNH…QEVRDASQTS (347 aa). 2 disordered regions span residues 930–958 and 977–1076; these read AAPPGPEYRLNPSRPINPFEPTAEPDWIS and LSPA…KPLV. 2 stretches are compositionally biased toward low complexity: residues 977 to 1004 and 1025 to 1040; these read LSPAPSSLARSSVSSQRSSTSIIPIKPN and SGSSSSGVPAPNLTPV. A compositionally biased stretch (polar residues) spans 1065–1076; it reads PEESSISWKPLV.

It belongs to the synaptojanin family. In the central section; belongs to the inositol 1,4,5-trisphosphate 5-phosphatase family. It depends on Mg(2+) as a cofactor.

The protein localises to the cytoplasm. It catalyses the reaction a 1,2-diacyl-sn-glycero-3-phospho-(1D-myo-inositol-4,5-bisphosphate) + H2O = a 1,2-diacyl-sn-glycero-3-phospho-(1D-myo-inositol 4-phosphate) + phosphate. Functionally, controls the cellular levels and subcellular distribution of phosphatidylinositol 3-phosphate and phosphatidylinositol 4,5-bisphosphate. Involved in distinct membrane trafficking and signal transduction pathways. Highly active against a range of soluble and lipid inositol phosphates. Active in dephosphorylating the 5-position of Ins(1,4,5)P3 and Ins(1,3,4,5)P4 and to a lesser extent Ins(1,4,5,6)P4. The enzyme is also active against PI(4,5)P2 presented in sonicated vesicles and Triton mixed micelles, and somewhat less active against PI(3,5)P2 in unilamellar vesicles. Activity against PI(3,5)P2 drops sharply when this substrate is presented in mixed micelles. Also hydrolyzes PIP3 to produce PI(3,4)P2. The protein is Inositol-1,4,5-trisphosphate 5-phosphatase 1 (syj1) of Schizosaccharomyces pombe (strain 972 / ATCC 24843) (Fission yeast).